A 502-amino-acid chain; its full sequence is Lipoyl synthase, apicoplast (502 aa).

Positions 1–16 are cleaved as a signal peptide; it reads MNFLVLFFSYSIFVLP. Positions 192, 197, 203, 218, 222, 225, and 433 each coordinate [4Fe-4S] cluster. Residues 204–422 form the Radical SAM core domain; that stretch reads WNIGTATIML…KDVGLKMGFK (219 aa).

This sequence belongs to the radical SAM superfamily. Lipoyl synthase family. Requires [4Fe-4S] cluster as cofactor.

It is found in the plastid. It localises to the apicoplast. It catalyses the reaction [[Fe-S] cluster scaffold protein carrying a second [4Fe-4S](2+) cluster] + N(6)-octanoyl-L-lysyl-[protein] + 2 oxidized [2Fe-2S]-[ferredoxin] + 2 S-adenosyl-L-methionine + 4 H(+) = [[Fe-S] cluster scaffold protein] + N(6)-[(R)-dihydrolipoyl]-L-lysyl-[protein] + 4 Fe(3+) + 2 hydrogen sulfide + 2 5'-deoxyadenosine + 2 L-methionine + 2 reduced [2Fe-2S]-[ferredoxin]. It functions in the pathway protein modification; protein lipoylation via endogenous pathway; protein N(6)-(lipoyl)lysine from octanoyl-[acyl-carrier-protein]: step 2/2. In terms of biological role, catalyzes the radical-mediated insertion of two sulfur atoms into the C-6 and C-8 positions of the octanoyl moiety bound to the lipoyl domains of lipoate-dependent enzymes, thereby converting the octanoylated domains into lipoylated derivatives. The protein is Lipoyl synthase, apicoplast of Plasmodium yoelii yoelii.